Reading from the N-terminus, the 138-residue chain is Venom allergen 2 (138 aa).

The signal sequence occupies residues 1-19; the sequence is MKSFVLATCLLGFAQIIYA.

It belongs to the ant venom allergen 2/4 family. Homodimer; disulfide-linked. As to expression, expressed by the venom gland.

It is found in the secreted. The sequence is that of Venom allergen 2 from Solenopsis saevissima (Fire ant).